The sequence spans 426 residues: Glutamate-1-semialdehyde 2,1-aminomutase (426 aa).

An N6-(pyridoxal phosphate)lysine modification is found at K265.

Belongs to the class-III pyridoxal-phosphate-dependent aminotransferase family. HemL subfamily. Homodimer. The cofactor is pyridoxal 5'-phosphate.

The protein resides in the cytoplasm. The catalysed reaction is (S)-4-amino-5-oxopentanoate = 5-aminolevulinate. It functions in the pathway porphyrin-containing compound metabolism; protoporphyrin-IX biosynthesis; 5-aminolevulinate from L-glutamyl-tRNA(Glu): step 2/2. This Shigella sonnei (strain Ss046) protein is Glutamate-1-semialdehyde 2,1-aminomutase.